The following is a 243-amino-acid chain: Carboxy-S-adenosyl-L-methionine synthase (243 aa).

S-adenosyl-L-methionine contacts are provided by residues Tyr-40, Gly-65–Ser-67, Asp-90–Asn-91, Asp-118–Ile-119, Asn-133, and Arg-200.

Belongs to the class I-like SAM-binding methyltransferase superfamily. Cx-SAM synthase family. As to quaternary structure, homodimer.

The enzyme catalyses prephenate + S-adenosyl-L-methionine = carboxy-S-adenosyl-L-methionine + 3-phenylpyruvate + H2O. Its function is as follows. Catalyzes the conversion of S-adenosyl-L-methionine (SAM) to carboxy-S-adenosyl-L-methionine (Cx-SAM). This Shewanella sediminis (strain HAW-EB3) protein is Carboxy-S-adenosyl-L-methionine synthase.